Here is a 396-residue protein sequence, read N- to C-terminus: Pectinesterase (396 aa).

The N-terminal stretch at 1–21 (MQSKTLYLKATALLGGCTVFA) is a signal peptide. A substrate-binding site is contributed by T174. Residue D232 is the Proton donor of the active site. The Nucleophile role is filled by D259. R324 and W326 together coordinate substrate.

The protein belongs to the pectinesterase family.

The protein resides in the secreted. It carries out the reaction [(1-&gt;4)-alpha-D-galacturonosyl methyl ester](n) + n H2O = [(1-&gt;4)-alpha-D-galacturonosyl](n) + n methanol + n H(+). The protein operates within glycan metabolism; pectin degradation; 2-dehydro-3-deoxy-D-gluconate from pectin: step 1/5. Functionally, involved in maceration and soft-rotting of plant tissue. This Ralstonia nicotianae (strain ATCC BAA-1114 / GMI1000) (Ralstonia solanacearum) protein is Pectinesterase (pme).